A 143-amino-acid chain; its full sequence is MFLGTYTPKLDDKGRLTLPAKFRDALAGGLMVTKSQDHSLAVYPRSEFEQLARRASKAPRSNPEARAFLRNLAAGTDEQHPDSQGRITLSADHRRYAGLTKDCVVIGAVDYLEIWDAQAWHEYQQLHEENFSAASDEALGDIF.

2 SpoVT-AbrB domains span residues 5–47 (TYTP…PRSE) and 76–119 (TDEQ…DAQA).

It belongs to the MraZ family. As to quaternary structure, forms oligomers.

The protein resides in the cytoplasm. It is found in the nucleoid. This chain is Transcriptional regulator MraZ, found in Mycobacterium ulcerans (strain Agy99).